We begin with the raw amino-acid sequence, 113 residues long: UPF0342 protein MGAS2096_Spy0691 (113 aa).

The protein belongs to the UPF0342 family.

This chain is UPF0342 protein MGAS2096_Spy0691, found in Streptococcus pyogenes serotype M12 (strain MGAS2096).